We begin with the raw amino-acid sequence, 235 residues long: MSDLASEGSDPAERASEHSNGNAPADRPARRSGDQAVADAAERAKATGSRNIPVLPDLPLPEDTANLRLGPDLSPAMLALLPMVGVWRGEGEGNDPARGDYRFGQQIIVSHDGGDYLSWESRSWFIEADGSYGGPDLRETGFWRVGVDGDDEVIELLLTHSSGIVELFYGTALTQSSWELATDVVIRSQSGVVVGGAKRLYGIVEGGDLAYVEERVVADGPLEPRLSARLQRYIG.

A disordered region spans residues 1–59 (MSDLASEGSDPAERASEHSNGNAPADRPARRSGDQAVADAAERAKATGSRNIPVLPDLP). Positions 85–91 (GVWRGEG) match the GXWXGXG motif.

The protein belongs to the nitrobindin family.

The protein is Ferric nitrobindin-like protein of Nocardia farcinica (strain IFM 10152).